A 191-amino-acid polypeptide reads, in one-letter code: Casparian strip membrane protein 4 (191 aa).

At 1-27 the chain is on the cytoplasmic side; sequence MKTGSVEAGEQASEDATPRRGKKLNRG. Residues 28–48 form a helical membrane-spanning segment; it reads ILILDLVLRVFGAICTLGSAV. Topologically, residues 49 to 72 are extracellular; that stretch reads AMGTTSQTLPSSSQFFRFRAKYND. The chain crosses the membrane as a helical span at residues 73–93; sequence LPMFMFFAIANSIVCAYLVLS. Residues 94 to 110 lie on the Cytoplasmic side of the membrane; it reads LRLSIFHIIRSAGIITR. Residues 111 to 131 form a helical membrane-spanning segment; sequence IILVTFDMVMLVLLTCGASAA. Residues 132 to 160 lie on the Extracellular side of the membrane; that stretch reads TSIVYLAHKGNASANWLPFCVRFSHFCNR. N-linked (GlcNAc...) asparagine glycosylation is present at asparagine 142. The helical transmembrane segment at 161–181 threads the bilayer; it reads ISGSLIGSFFSIIIFMLLVIL. The Cytoplasmic portion of the chain corresponds to 182–191; that stretch reads SAVSQFSICN.

The protein belongs to the Casparian strip membrane proteins (CASP) family. In terms of assembly, homodimer and heterodimers.

Its subcellular location is the cell membrane. Its function is as follows. Regulates membrane-cell wall junctions and localized cell wall deposition. Required for establishment of the Casparian strip membrane domain (CSD) and the subsequent formation of Casparian strips, a cell wall modification of the root endodermis that determines an apoplastic barrier between the intraorganismal apoplasm and the extraorganismal apoplasm and prevents lateral diffusion. The sequence is that of Casparian strip membrane protein 4 from Ricinus communis (Castor bean).